A 211-amino-acid chain; its full sequence is Large ribosomal subunit protein eL13 (211 aa).

Position 16 is an N6-acetyllysine (K16). A phosphoserine mark is found at S52, S77, and S106. Residues K123 and K145 each participate in a glycyl lysine isopeptide (Lys-Gly) (interchain with G-Cter in SUMO2) cross-link. K174 participates in a covalent cross-link: Glycyl lysine isopeptide (Lys-Gly) (interchain with G-Cter in SUMO1); alternate. Glycyl lysine isopeptide (Lys-Gly) (interchain with G-Cter in SUMO2); alternate cross-links involve residues K174 and K177. The residue at position 177 (K177) is an N6-acetyllysine; alternate.

It belongs to the eukaryotic ribosomal protein eL13 family. Component of the large ribosomal subunit.

Its subcellular location is the cytoplasm. In terms of biological role, component of the large ribosomal subunit. The ribosome is a large ribonucleoprotein complex responsible for the synthesis of proteins in the cell. This is Large ribosomal subunit protein eL13 (Rpl13) from Mus musculus (Mouse).